The sequence spans 373 residues: Dual-specificity RNA methyltransferase RlmN (373 aa).

The active-site Proton acceptor is E94. The 240-residue stretch at 100-339 folds into the Radical SAM core domain; the sequence is EEDRATLCVS…VIVRKTRGDD (240 aa). C107 and C344 are oxidised to a cystine. Residues C114, C118, and C121 each coordinate [4Fe-4S] cluster. Residues 168–169, S200, 222–224, and N301 contribute to the S-adenosyl-L-methionine site; these read GE and SIH. The active-site S-methylcysteine intermediate is the C344.

Belongs to the radical SAM superfamily. RlmN family. Requires [4Fe-4S] cluster as cofactor.

The protein localises to the cytoplasm. It carries out the reaction adenosine(2503) in 23S rRNA + 2 reduced [2Fe-2S]-[ferredoxin] + 2 S-adenosyl-L-methionine = 2-methyladenosine(2503) in 23S rRNA + 5'-deoxyadenosine + L-methionine + 2 oxidized [2Fe-2S]-[ferredoxin] + S-adenosyl-L-homocysteine. The enzyme catalyses adenosine(37) in tRNA + 2 reduced [2Fe-2S]-[ferredoxin] + 2 S-adenosyl-L-methionine = 2-methyladenosine(37) in tRNA + 5'-deoxyadenosine + L-methionine + 2 oxidized [2Fe-2S]-[ferredoxin] + S-adenosyl-L-homocysteine. In terms of biological role, specifically methylates position 2 of adenine 2503 in 23S rRNA and position 2 of adenine 37 in tRNAs. m2A2503 modification seems to play a crucial role in the proofreading step occurring at the peptidyl transferase center and thus would serve to optimize ribosomal fidelity. This chain is Dual-specificity RNA methyltransferase RlmN, found in Shewanella loihica (strain ATCC BAA-1088 / PV-4).